A 221-amino-acid chain; its full sequence is Intraflagellar transport-associated protein (221 aa).

Residue S59 is modified to Phosphoserine.

Interacts with IFT122; the interaction associates IFTAP with IFT-A complex.

Functionally, seems to play a role in ciliary BBSome localization, maybe through interaction with IFT-A complex. This chain is Intraflagellar transport-associated protein, found in Homo sapiens (Human).